The following is a 107-amino-acid chain: U1-lycotoxin-Ls1d (107 aa).

The signal sequence occupies residues 1–20 (MMKVLVVVALLVTLISYSSS). The propeptide occupies 21–41 (EGIDDLEADELLSLMANEQTR). Intrachain disulfides connect Cys44–Cys59, Cys51–Cys68, Cys58–Cys86, and Cys70–Cys84.

This sequence belongs to the neurotoxin 19 (CSTX) family. 04 (U1-Lctx) subfamily. In terms of tissue distribution, expressed by the venom gland.

Its subcellular location is the secreted. This Lycosa singoriensis (Wolf spider) protein is U1-lycotoxin-Ls1d.